The following is a 261-amino-acid chain: Indole-3-glycerol phosphate synthase (261 aa).

The protein belongs to the TrpC family.

It catalyses the reaction 1-(2-carboxyphenylamino)-1-deoxy-D-ribulose 5-phosphate + H(+) = (1S,2R)-1-C-(indol-3-yl)glycerol 3-phosphate + CO2 + H2O. The protein operates within amino-acid biosynthesis; L-tryptophan biosynthesis; L-tryptophan from chorismate: step 4/5. This Burkholderia ambifaria (strain ATCC BAA-244 / DSM 16087 / CCUG 44356 / LMG 19182 / AMMD) (Burkholderia cepacia (strain AMMD)) protein is Indole-3-glycerol phosphate synthase.